The chain runs to 244 residues: Protein crossbronx (244 aa).

In terms of domain architecture, UBC core spans 20–176; that stretch reads QQEYKILAEY…VQENIKESKE (157 aa). The segment at 209–244 is disordered; that stretch reads AGRSKQTEPSAQQGNGGHATGLSWVKEGEFKPLSIE.

The protein belongs to the ubiquitin-conjugating enzyme family. FTS subfamily.

The protein is Protein crossbronx (cbx) of Drosophila simulans (Fruit fly).